Consider the following 129-residue polypeptide: Small ribosomal subunit protein uS11 (129 aa).

It belongs to the universal ribosomal protein uS11 family. In terms of assembly, part of the 30S ribosomal subunit. Interacts with proteins S7 and S18. Binds to IF-3.

In terms of biological role, located on the platform of the 30S subunit, it bridges several disparate RNA helices of the 16S rRNA. Forms part of the Shine-Dalgarno cleft in the 70S ribosome. The polypeptide is Small ribosomal subunit protein uS11 (Dinoroseobacter shibae (strain DSM 16493 / NCIMB 14021 / DFL 12)).